Reading from the N-terminus, the 374-residue chain is Anhydro-N-acetylmuramic acid kinase (374 aa).

12 to 19 (GTSLDGID) is an ATP binding site.

This sequence belongs to the anhydro-N-acetylmuramic acid kinase family.

The enzyme catalyses 1,6-anhydro-N-acetyl-beta-muramate + ATP + H2O = N-acetyl-D-muramate 6-phosphate + ADP + H(+). It participates in amino-sugar metabolism; 1,6-anhydro-N-acetylmuramate degradation. The protein operates within cell wall biogenesis; peptidoglycan recycling. Catalyzes the specific phosphorylation of 1,6-anhydro-N-acetylmuramic acid (anhMurNAc) with the simultaneous cleavage of the 1,6-anhydro ring, generating MurNAc-6-P. Is required for the utilization of anhMurNAc either imported from the medium or derived from its own cell wall murein, and thus plays a role in cell wall recycling. The protein is Anhydro-N-acetylmuramic acid kinase of Sodalis glossinidius (strain morsitans).